The chain runs to 673 residues: Outer spore wall assembly protein SHE10 (673 aa).

A signal peptide spans 1 to 24; that stretch reads MRRVRGVGNLLVTILVVLIGFKQA. Positions 503-568 form a coiled coil; the sequence is ILRSQANIAF…LALEQGQGQE (66 aa). 2 disordered regions span residues 530–551 and 587–673; these read LEQE…AENE and TPLG…SQAN. Composition is skewed to acidic residues over residues 593–605 and 612–629; these read DNTD…DDAD and GDSE…EEDA. Positions 617 to 647 form a coiled coil; sequence NFYDSYEGDEEDASRELERLERESAERETLD. The segment covering 630–673 has biased composition (basic and acidic residues); it reads SRELERLERESAERETLDRLELGQRQKLQEEQHRDELHHSSQAN.

This sequence belongs to the SHE10 family. In terms of assembly, component of the mitochondria-localized RNase mitochondrial RNA-processing (RNase MRP) composed of one single RNA encoded by the NME1 gene and at least 31 proteins. Absent in the nucleus-localized RNase MRP (NuMRP).

It localises to the mitochondrion. In terms of biological role, involved in spore wall assembly. May be a component of the mitochondrial RNase MRP (MtMRP), a ribonucleoprotein endoribonuclease involved in the cleaving RNA transcripts to generate primers for DNA replication in mitochondria. The polypeptide is Outer spore wall assembly protein SHE10 (Lachancea thermotolerans (strain ATCC 56472 / CBS 6340 / NRRL Y-8284) (Yeast)).